A 406-amino-acid polypeptide reads, in one-letter code: Phosphatidylinositol 5-phosphate 4-kinase type-2 alpha (406 aa).

At Ala-2 the chain carries N-acetylalanine. Thr-3 bears the Phosphothreonine mark. The residue at position 14 (Ser-14) is a Phosphoserine. Residues Ala-33 to Leu-405 enclose the PIPK domain. Residues Val-59 to Asp-65 form a required for interaction with PIP5K1A region. Lys-89 and Lys-145 each carry N6-acetyllysine. Positions Gln-288–Pro-329 are disordered. The span at Glu-289–Ser-304 shows a compositional bias: acidic residues.

Homodimer. Interacts with PIP4K2B; the interaction may regulate localization to the nucleus. Probably interacts with PIP5K1A; the interaction inhibits PIP5K1A kinase activity. Phosphorylated in tyrosines. Phosphorylation is induced by light and increases kinase activity.

Its subcellular location is the cell membrane. The protein resides in the nucleus. It is found in the lysosome. It localises to the cytoplasm. The protein localises to the photoreceptor inner segment. Its subcellular location is the cell projection. The protein resides in the cilium. It is found in the photoreceptor outer segment. It catalyses the reaction a 1,2-diacyl-sn-glycero-3-phospho-(1D-myo-inositol-5-phosphate) + ATP = a 1,2-diacyl-sn-glycero-3-phospho-(1D-myo-inositol-4,5-bisphosphate) + ADP + H(+). The catalysed reaction is 1,2-dihexadecanoyl-sn-glycero-3-phospho-(1D-myo-inositol-5-phosphate) + ATP = 1,2-dihexadecanoyl-sn-glycero-3-phospho-(1D-myo-inositol-4,5-bisphosphate) + ADP + H(+). It carries out the reaction 1,2-dihexadecanoyl-sn-glycero-3-phospho-(1D-myo-inositol-5-phosphate) + GTP = 1,2-dihexadecanoyl-sn-glycero-3-phospho-(1D-myo-inositol-4,5-bisphosphate) + GDP + H(+). In rod outer segments, activated by light. Functionally, catalyzes the phosphorylation of phosphatidylinositol 5-phosphate (PtdIns5P) on the fourth hydroxyl of the myo-inositol ring, to form phosphatidylinositol 4,5-bisphosphate (PtdIns(4,5)P2). Has both ATP- and GTP-dependent kinase activities. May exert its function by regulating the levels of PtdIns5P, which functions in the cytosol by increasing AKT activity and in the nucleus signals through ING2. May regulate the pool of cytosolic PtdIns5P in response to the activation of tyrosine phosphorylation. May be involved in thrombopoiesis, and the terminal maturation of megakaryocytes and regulation of their size. May negatively regulate insulin-stimulated glucose uptake by lowering the levels of PtdIns5P. The chain is Phosphatidylinositol 5-phosphate 4-kinase type-2 alpha (PIP4K2A) from Sus scrofa (Pig).